A 138-amino-acid chain; its full sequence is Transcription antitermination protein NusB (138 aa).

This sequence belongs to the NusB family.

Functionally, involved in transcription antitermination. Required for transcription of ribosomal RNA (rRNA) genes. Binds specifically to the boxA antiterminator sequence of the ribosomal RNA (rrn) operons. The polypeptide is Transcription antitermination protein NusB (Coxiella burnetii (strain CbuK_Q154) (Coxiella burnetii (strain Q154))).